The sequence spans 286 residues: Formamidopyrimidine-DNA glycosylase (286 aa).

Residue Pro-2 is the Schiff-base intermediate with DNA of the active site. The active-site Proton donor is Glu-3. Lys-61 serves as the catalytic Proton donor; for beta-elimination activity. His-103, Arg-122, and Arg-164 together coordinate DNA. The FPG-type zinc-finger motif lies at 250-284; it reads NAYGQTGEPCGRCGTQIVRENFMNRGSHYCPNCQK. Arg-274 functions as the Proton donor; for delta-elimination activity in the catalytic mechanism.

It belongs to the FPG family. Monomer. Requires Zn(2+) as cofactor.

The catalysed reaction is Hydrolysis of DNA containing ring-opened 7-methylguanine residues, releasing 2,6-diamino-4-hydroxy-5-(N-methyl)formamidopyrimidine.. It carries out the reaction 2'-deoxyribonucleotide-(2'-deoxyribose 5'-phosphate)-2'-deoxyribonucleotide-DNA = a 3'-end 2'-deoxyribonucleotide-(2,3-dehydro-2,3-deoxyribose 5'-phosphate)-DNA + a 5'-end 5'-phospho-2'-deoxyribonucleoside-DNA + H(+). Functionally, involved in base excision repair of DNA damaged by oxidation or by mutagenic agents. Acts as a DNA glycosylase that recognizes and removes damaged bases. Has a preference for oxidized purines, such as 7,8-dihydro-8-oxoguanine (8-oxoG). Has AP (apurinic/apyrimidinic) lyase activity and introduces nicks in the DNA strand. Cleaves the DNA backbone by beta-delta elimination to generate a single-strand break at the site of the removed base with both 3'- and 5'-phosphates. This Corynebacterium glutamicum (strain R) protein is Formamidopyrimidine-DNA glycosylase.